The sequence spans 373 residues: Peroxisomal biogenesis factor 3 (373 aa).

The Cytoplasmic segment spans residues 1–15 (MFRSTWNFLKRHKKK). Residues 1–45 (MFRSTWNFLKRHKKKCIFLGTVLGGVYILGKYGQKKIREIQEREA) are targeting to peroxisomes. The helical transmembrane segment at 16–36 (CIFLGTVLGGVYILGKYGQKK) threads the bilayer. At 37 to 116 (IREIQEREAA…LKIISFTRSI (80 aa)) the chain is on the peroxisomal side. Residues 117–140 (VAVYSTCMLVVLLRVQLNIIGGYI) traverse the membrane as a helical segment. Residues 120–136 (YSTCMLVVLLRVQLNII) are interaction with PEX19. Topologically, residues 141 to 373 (YLDNAAVGKN…AFSTPQQLEK (233 aa)) are cytoplasmic.

Belongs to the peroxin-3 family. In terms of assembly, interacts with PEX19.

Its subcellular location is the peroxisome membrane. Functionally, involved in peroxisome biosynthesis and integrity. Assembles membrane vesicles before the matrix proteins are translocated. As a docking factor for PEX19, is necessary for the import of peroxisomal membrane proteins in the peroxisomes. This Bos taurus (Bovine) protein is Peroxisomal biogenesis factor 3 (PEX3).